Consider the following 223-residue polypeptide: Urease accessory protein UreF (223 aa).

The protein belongs to the UreF family. In terms of assembly, ureD, UreF and UreG form a complex that acts as a GTP-hydrolysis-dependent molecular chaperone, activating the urease apoprotein by helping to assemble the nickel containing metallocenter of UreC. The UreE protein probably delivers the nickel.

The protein localises to the cytoplasm. Its function is as follows. Required for maturation of urease via the functional incorporation of the urease nickel metallocenter. The sequence is that of Urease accessory protein UreF from Rhizobium leguminosarum bv. trifolii (strain WSM2304).